We begin with the raw amino-acid sequence, 214 residues long: tRNA (guanine-N(7)-)-methyltransferase (214 aa).

S-adenosyl-L-methionine contacts are provided by Glu-43, Glu-68, Asp-95, and Asp-117. The active site involves Asp-117. Residues Lys-121, Asp-153, and 190–193 (TEYE) each bind substrate.

It belongs to the class I-like SAM-binding methyltransferase superfamily. TrmB family.

It carries out the reaction guanosine(46) in tRNA + S-adenosyl-L-methionine = N(7)-methylguanosine(46) in tRNA + S-adenosyl-L-homocysteine. It functions in the pathway tRNA modification; N(7)-methylguanine-tRNA biosynthesis. Catalyzes the formation of N(7)-methylguanine at position 46 (m7G46) in tRNA. The chain is tRNA (guanine-N(7)-)-methyltransferase from Staphylococcus aureus (strain MSSA476).